The chain runs to 142 residues: MAKKVTAYIKLQVKAGSANPSPPVGPALGQHGVNIMEFCKAFNARTEKLEKGSPTPVVITVYSDRSFTFETKTPPAAFLLKKAAGIQSGSAKPNKDKVGKVTVAQLQEIAKTKEPDMTGADLDAKVRCIAGSARSMGLVVED.

The protein belongs to the universal ribosomal protein uL11 family. Part of the ribosomal stalk of the 50S ribosomal subunit. Interacts with L10 and the large rRNA to form the base of the stalk. L10 forms an elongated spine to which L12 dimers bind in a sequential fashion forming a multimeric L10(L12)X complex. In terms of processing, one or more lysine residues are methylated.

In terms of biological role, forms part of the ribosomal stalk which helps the ribosome interact with GTP-bound translation factors. In Aeromonas hydrophila subsp. hydrophila (strain ATCC 7966 / DSM 30187 / BCRC 13018 / CCUG 14551 / JCM 1027 / KCTC 2358 / NCIMB 9240 / NCTC 8049), this protein is Large ribosomal subunit protein uL11.